The sequence spans 121 residues: Large ribosomal subunit protein eL18 (121 aa).

The protein belongs to the eukaryotic ribosomal protein eL18 family.

The polypeptide is Large ribosomal subunit protein eL18 (Methanocaldococcus jannaschii (strain ATCC 43067 / DSM 2661 / JAL-1 / JCM 10045 / NBRC 100440) (Methanococcus jannaschii)).